A 188-amino-acid polypeptide reads, in one-letter code: Elongation factor P (188 aa).

This sequence belongs to the elongation factor P family.

It is found in the cytoplasm. Its pathway is protein biosynthesis; polypeptide chain elongation. Its function is as follows. Involved in peptide bond synthesis. Stimulates efficient translation and peptide-bond synthesis on native or reconstituted 70S ribosomes in vitro. Probably functions indirectly by altering the affinity of the ribosome for aminoacyl-tRNA, thus increasing their reactivity as acceptors for peptidyl transferase. The sequence is that of Elongation factor P from Chlorobaculum parvum (strain DSM 263 / NCIMB 8327) (Chlorobium vibrioforme subsp. thiosulfatophilum).